The sequence spans 193 residues: MDKQQDQQQEARPVLEGPDIARVLTRIAHEIVERAKGADDVVLLGIPTRGVFLARRLADKLEQITERKMPVGSLDITMYRDDLRMHPPRALARTEIPGDGIDGRLVVLVDDVLFSGRTIRAALDALNDIGRPRAVQLAVLVDRGHRELPIRADYVGKNLPTSLRETVKVQLAEEDGRDTVLLGAKPAAPGAHP.

Substrate contacts are provided by residues 48–49 (TR), R89, R93, 110–118 (DDVLFSGRT), R143, and V167. The PRPP-binding motif lies at 106 to 118 (VVLVDDVLFSGRT).

The protein belongs to the purine/pyrimidine phosphoribosyltransferase family. PyrR subfamily.

It catalyses the reaction UMP + diphosphate = 5-phospho-alpha-D-ribose 1-diphosphate + uracil. Functionally, regulates the transcription of the pyrimidine nucleotide (pyr) operon in response to exogenous pyrimidines. In terms of biological role, also displays a weak uracil phosphoribosyltransferase activity which is not physiologically significant. The protein is Bifunctional protein PyrR of Streptomyces coelicolor (strain ATCC BAA-471 / A3(2) / M145).